We begin with the raw amino-acid sequence, 181 residues long: 3-isopropylmalate dehydratase small subunit (181 aa).

It belongs to the LeuD family. LeuD type 2 subfamily. In terms of assembly, heterodimer of LeuC and LeuD.

It carries out the reaction (2R,3S)-3-isopropylmalate = (2S)-2-isopropylmalate. It functions in the pathway amino-acid biosynthesis; L-leucine biosynthesis; L-leucine from 3-methyl-2-oxobutanoate: step 2/4. Functionally, catalyzes the isomerization between 2-isopropylmalate and 3-isopropylmalate, via the formation of 2-isopropylmaleate. This Deinococcus deserti (strain DSM 17065 / CIP 109153 / LMG 22923 / VCD115) protein is 3-isopropylmalate dehydratase small subunit.